The following is a 50-amino-acid chain: Protein hunchback (50 aa).

3 consecutive C2H2-type zinc fingers follow at residues 1-5 (HILKH), 11-33 (IRCP…MKSH), and 39-50 (YRCLDCNYATKY).

This sequence belongs to the hunchback C2H2-type zinc-finger protein family.

Its subcellular location is the nucleus. Gap class segmentation protein that controls development of head structures. The chain is Protein hunchback (hb) from Bradysia coprophila (Dark-winged fungus gnat).